Consider the following 267-residue polypeptide: 4-hydroxy-tetrahydrodipicolinate reductase (267 aa).

Residues 12–17 (GARGRM), aspartate 38, 100–102 (GTT), and 126–129 (APNF) each bind NAD(+). Histidine 156 functions as the Proton donor/acceptor in the catalytic mechanism. Residue histidine 157 coordinates (S)-2,3,4,5-tetrahydrodipicolinate. The Proton donor role is filled by lysine 160. 166-167 (GT) contributes to the (S)-2,3,4,5-tetrahydrodipicolinate binding site.

It belongs to the DapB family.

It localises to the cytoplasm. It catalyses the reaction (S)-2,3,4,5-tetrahydrodipicolinate + NAD(+) + H2O = (2S,4S)-4-hydroxy-2,3,4,5-tetrahydrodipicolinate + NADH + H(+). It carries out the reaction (S)-2,3,4,5-tetrahydrodipicolinate + NADP(+) + H2O = (2S,4S)-4-hydroxy-2,3,4,5-tetrahydrodipicolinate + NADPH + H(+). Its pathway is amino-acid biosynthesis; L-lysine biosynthesis via DAP pathway; (S)-tetrahydrodipicolinate from L-aspartate: step 4/4. Its function is as follows. Catalyzes the conversion of 4-hydroxy-tetrahydrodipicolinate (HTPA) to tetrahydrodipicolinate. The sequence is that of 4-hydroxy-tetrahydrodipicolinate reductase from Bacillus pumilus (strain SAFR-032).